The following is a 184-amino-acid chain: Guanylate kinase (184 aa).

The 179-residue stretch at 5-183 (KKLIILTGPS…TAKRIIKLIQ (179 aa)) folds into the Guanylate kinase-like domain. 12 to 19 (GPSGVGKG) serves as a coordination point for ATP.

The protein belongs to the guanylate kinase family.

It localises to the cytoplasm. The catalysed reaction is GMP + ATP = GDP + ADP. In terms of biological role, essential for recycling GMP and indirectly, cGMP. The polypeptide is Guanylate kinase (Prochlorococcus marinus (strain MIT 9312)).